A 103-amino-acid chain; its full sequence is Large ribosomal subunit protein uL24 (103 aa).

The protein belongs to the universal ribosomal protein uL24 family. Part of the 50S ribosomal subunit.

One of two assembly initiator proteins, it binds directly to the 5'-end of the 23S rRNA, where it nucleates assembly of the 50S subunit. Functionally, one of the proteins that surrounds the polypeptide exit tunnel on the outside of the subunit. The sequence is that of Large ribosomal subunit protein uL24 from Histophilus somni (strain 129Pt) (Haemophilus somnus).